The chain runs to 872 residues: Alanine--tRNA ligase (872 aa).

Positions 567, 571, 669, and 673 each coordinate Zn(2+).

The protein belongs to the class-II aminoacyl-tRNA synthetase family. The cofactor is Zn(2+).

Its subcellular location is the cytoplasm. It carries out the reaction tRNA(Ala) + L-alanine + ATP = L-alanyl-tRNA(Ala) + AMP + diphosphate. Functionally, catalyzes the attachment of alanine to tRNA(Ala) in a two-step reaction: alanine is first activated by ATP to form Ala-AMP and then transferred to the acceptor end of tRNA(Ala). Also edits incorrectly charged Ser-tRNA(Ala) and Gly-tRNA(Ala) via its editing domain. This chain is Alanine--tRNA ligase, found in Streptococcus pyogenes serotype M3 (strain ATCC BAA-595 / MGAS315).